Reading from the N-terminus, the 161-residue chain is DNA-binding protein inhibitor ID-4 (161 aa).

The region spanning 52-104 is the bHLH domain; sequence AAEAAADEPALCLQCDMNDCYSRLRRLVPTIPPNKKVSKVEILQHVIDYILDL. Positions 117-126 are enriched in pro residues; that stretch reads QPPPPAPPHH. Residues 117-161 are disordered; the sequence is QPPPPAPPHHPAGTCPAAPPRTPLTALNTDPAGAVNKQGDSILCR.

In terms of assembly, heterodimer with other HLH proteins.

It localises to the nucleus. Functionally, transcriptional regulator (lacking a basic DNA binding domain) which negatively regulates the basic helix-loop-helix (bHLH) transcription factors by forming heterodimers and inhibiting their DNA binding and transcriptional activity. Implicated in regulating a variety of cellular processes, including cellular growth, senescence, differentiation, apoptosis, angiogenesis, and neoplastic transformation. The protein is DNA-binding protein inhibitor ID-4 (ID4) of Homo sapiens (Human).